Reading from the N-terminus, the 127-residue chain is DNA-directed RNA polymerases I, II, and III subunit RPABC2 (127 aa).

Residues 1 to 34 show a composition bias toward acidic residues; sequence MSDNEDNFDGDDFDDVEEDEGLDDLENAEEEGQE. The interval 1-53 is disordered; sequence MSDNEDNFDGDDFDDVEEDEGLDDLENAEEEGQENVEILPSGERPQANQKRIT. At Ser2 the chain carries N-acetylserine. Phosphoserine; by CK2 is present on Ser2.

The protein belongs to the archaeal Rpo6/eukaryotic RPB6 RNA polymerase subunit family. Component of the RNA polymerase I (Pol I), RNA polymerase II (Pol II) and RNA polymerase III (Pol III) complexes consisting of at least 13, 12 and 17 subunits, respectively. Pol I complex consists of a ten-subunit catalytic core composed of POLR1A/RPA1, POLR1B/RPA2, POLR1C/RPAC1, POLR1D/RPAC2, POLR1H/RPA12, POLR2E/RPABC1, POLR2F/RPABC2, POLR2H/RPABC3, POLR2K/RPABC4 and POLR2L/RPABC5; a mobile stalk subunit POLR1F/RPA43 protruding from the core and additional subunits homologous to general transcription factors POLR1E/RPA49 and POLR1G/RPA34. Part of Pol I pre-initiation complex (PIC), in which Pol I core assembles with RRN3 and promoter-bound UTBF and SL1/TIF-IB complex. Pol II complex contains a ten-subunit catalytic core composed of POLR2A/RPB1, POLR2B/RPB2, POLR2C/RPB3, POLR2I/RPB9, POLR2J/RPB11, POLR2E/RPABC1, POLR2F/RPABC2, POLR2H/RPABC3, POLR2K/RPABC4 and POLR2L/RPABC5 and a mobile stalk composed of two subunits POLR2D/RPB4 and POLR2G/RPB7. Part of Pol II(G) complex, in which Pol II core associates with an additional subunit POLR2M; unlike conventional Pol II, Pol II(G) functions as a transcriptional repressor. Part of TBP-based Pol II pre-initiation complex (PIC), in which Pol II core assembles with general transcription factors and other specific initiation factors including GTF2E1, GTF2E2, GTF2F1, GTF2F2, TCEA1, ERCC2, ERCC3, GTF2H2, GTF2H3, GTF2H4, GTF2H5, GTF2A1, GTF2A2, GTF2B and TBP; this large multi-subunit PIC complex mediates DNA unwinding and targets Pol II core to the transcription start site where the first phosphodiester bond forms. Pol III complex consists of a ten-subunit catalytic core composed of POLR3A/RPC1, POLR3B/RPC2, POLR1C/RPAC1, POLR1D/RPAC2, POLR3K/RPC10, POLR2E/RPABC1, POLR2F/RPABC2, POLR2H/RPABC3, POLR2K/RPABC4 and POLR2L/RPABC5; a mobile stalk composed of two subunits POLR3H/RPC8 and CRCP/RPC9, protruding from the core and functioning primarily in transcription initiation; and additional subunits homologous to general transcription factors of the RNA polymerase II machinery, POLR3C/RPC3-POLR3F/RPC6-POLR3G/RPC7 heterotrimer required for transcription initiation and POLR3D/RPC4-POLR3E/RPC5 heterodimer involved in both transcription initiation and termination.

The protein resides in the nucleus. The protein localises to the nucleolus. Functionally, DNA-dependent RNA polymerase catalyzes the transcription of DNA into RNA using the four ribonucleoside triphosphates as substrates. Common component of RNA polymerases I, II, and III which synthesize ribosomal RNA precursors, mRNA precursors and many functional non-coding RNAs, and small RNAs, such as 5S rRNA and tRNAs, respectively. Pol II is the central component of the basal RNA polymerase II transcription machinery. Pols are composed of mobile elements that move relative to each other. In Pol II, POLR2F/RPABC2 is part of the clamp element and together with parts of POLR2A/RPB1 and POLR2B/RPB2 forms a pocket to which the POLR2D/RPB4-POLR2G/RPB7 subcomplex binds. This Mus musculus (Mouse) protein is DNA-directed RNA polymerases I, II, and III subunit RPABC2.